A 562-amino-acid polypeptide reads, in one-letter code: Tissue-type plasminogen activator (562 aa).

Positions 1 to 19 are cleaved as a signal peptide; sequence MYALKRELWCVLLLCGAIC. A propeptide spanning residues 20-32 is cleaved from the precursor; sequence TSPSQETHRRLRR. The propeptide at 33–35 is removed by plasmin; that stretch reads GVR. The Fibronectin type-I domain maps to 39–81; that stretch reads VTCRDEKTQMIYQQHQSWLRPLLRGNRVEHCWCNDGQTQCHSV. 17 disulfides stabilise this stretch: C41-C71, C69-C78, C86-C97, C91-C108, C110-C119, C127-C208, C148-C190, C179-C203, C215-C296, C236-C278, C267-C291, C299-C430, C342-C358, C350-C419, C444-C519, C476-C492, and C509-C537. Residues 42–52 form an important for binding to annexin A2 region; sequence RDEKTQMIYQQ. Residues 82–120 enclose the EGF-like domain; that stretch reads PVKSCSEPRCFNGGTCLQAIYFSDFVCQCPVGFIGRQCE. A glycan (O-linked (Fuc) threonine) is linked at T96. Kringle domains are found at residues 126–208 and 214–296; these read TCYE…TPAC and ECYT…LPQC. The N-linked (GlcNAc...) asparagine glycan is linked to N152. Residues 311-561 enclose the Peptidase S1 domain; it reads IKGGLYADIT…YLNWIRDNTR (251 aa). Catalysis depends on charge relay system residues H357 and D406. The N-linked (GlcNAc...) asparagine glycan is linked to N483. Catalysis depends on S513, which acts as the Charge relay system.

It belongs to the peptidase S1 family. As to quaternary structure, heterodimer of chain A and chain B held by a disulfide bond. Binds to fibrin with high affinity. This interaction leads to an increase in the catalytic efficiency of the enzyme due to an increase in affinity for plasminogen. Similarly, binding to heparin increases the activation of plasminogen. Binds to annexin A2, cytokeratin-8, fibronectin and laminin. Binds to mannose receptor and the low-density lipoprotein receptor-related protein (LRP1); these proteins are involved in TPA clearance. Binds LRP1B; binding is followed by internalization and degradation. Forms heterodimer with SERPINA5. Interacts with SERPINE1. In complex with SERPINE1, interacts with SORL1. In terms of processing, the single chain, almost fully active enzyme, can be further processed into a two-chain fully active form by a cleavage after Arg-310 catalyzed by plasmin, tissue kallikrein or factor Xa.

The protein localises to the secreted. The protein resides in the extracellular space. It carries out the reaction Specific cleavage of Arg-|-Val bond in plasminogen to form plasmin.. Inhibited by SERPINA5. Inhibited by SERPINE1. Functionally, converts the abundant, but inactive, zymogen plasminogen to plasmin by hydrolyzing a single Arg-Val bond in plasminogen. By controlling plasmin-mediated proteolysis, it plays an important role in tissue remodeling and degradation, in cell migration and many other physiopathological events. During oocyte activation, plays a role in cortical granule reaction in the zona reaction, which contributes to the block to polyspermy. The polypeptide is Tissue-type plasminogen activator (PLAT) (Sus scrofa (Pig)).